A 427-amino-acid chain; its full sequence is Histidine--tRNA ligase (427 aa).

The protein belongs to the class-II aminoacyl-tRNA synthetase family. In terms of assembly, homodimer.

It localises to the cytoplasm. It carries out the reaction tRNA(His) + L-histidine + ATP = L-histidyl-tRNA(His) + AMP + diphosphate + H(+). In Corynebacterium urealyticum (strain ATCC 43042 / DSM 7109), this protein is Histidine--tRNA ligase.